We begin with the raw amino-acid sequence, 129 residues long: Glycine cleavage system H protein (129 aa).

Positions 24–106 constitute a Lipoyl-binding domain; it reads TYTVGITEHA…YAGGWIFKIK (83 aa). Lys-65 is modified (N6-lipoyllysine).

It belongs to the GcvH family. In terms of assembly, the glycine cleavage system is composed of four proteins: P, T, L and H. It depends on (R)-lipoate as a cofactor.

Its function is as follows. The glycine cleavage system catalyzes the degradation of glycine. The H protein shuttles the methylamine group of glycine from the P protein to the T protein. This is Glycine cleavage system H protein from Escherichia coli O139:H28 (strain E24377A / ETEC).